The chain runs to 206 residues: Small ribosomal subunit protein uS4 (206 aa).

Residues 96–156 form the S4 RNA-binding domain; the sequence is TRLDNVVYRM…EKSRTQARIK (61 aa).

Belongs to the universal ribosomal protein uS4 family. Part of the 30S ribosomal subunit. Contacts protein S5. The interaction surface between S4 and S5 is involved in control of translational fidelity.

Functionally, one of the primary rRNA binding proteins, it binds directly to 16S rRNA where it nucleates assembly of the body of the 30S subunit. In terms of biological role, with S5 and S12 plays an important role in translational accuracy. The chain is Small ribosomal subunit protein uS4 from Shewanella amazonensis (strain ATCC BAA-1098 / SB2B).